The following is a 507-amino-acid chain: MEQLKIDLNLGRSQQHDFIYPLIFQEYIYALAHDRGLNRSIFLENAGYDNKFSLLIVKRLITHLITQMYQQNHFLFSVNDSNQKKILGYNTNLYSQMIFEGFAVVVEIPFYLRLLSFLEGKERMKSHNLRSIHSIFPFLEDKFAFLNYVLDIQIPHPIHLEIFIQTLRYWVKDASSLHLLRFFLHEYPIWNSFLIRKKSSFSFSKRNQRFFFFLYNFHVCEYESIFVFLRNQSFHLRSISYETFLERISFYRKIELEEVFTKDFKAILWVFKEPFLHYVRYRGNALLASKGTSLLMNKWKHYIVNFWQCYFYIWSQPRRIDINQLSNHSLDFLGYLSSVRLKHLMVRSQMIENSFLIENASKKFDTLMPITPMIGSLSKAKFCNVLGHPMSKPAWSALSDSDIIERFGRIYRNLSHYYSGSLKKRNLYRIKYILRLSCARTLARKHKSTVRAFLKRLGMGLLEEFFTEEEQVFYLTLPKASSTSGELYRRRVWYLDIICINHMSNYE.

Belongs to the intron maturase 2 family. MatK subfamily.

The protein localises to the plastid. It is found in the chloroplast. In terms of biological role, usually encoded in the trnK tRNA gene intron. Probably assists in splicing its own and other chloroplast group II introns. This Kalmia procumbens (Alpine azalea) protein is Maturase K.